Reading from the N-terminus, the 514-residue chain is UDP-N-acetylmuramoyl-L-alanyl-D-glutamate--2,6-diaminopimelate ligase (514 aa).

A UDP-N-acetyl-alpha-D-muramoyl-L-alanyl-D-glutamate-binding site is contributed by T37. G125–S131 serves as a coordination point for ATP. UDP-N-acetyl-alpha-D-muramoyl-L-alanyl-D-glutamate-binding positions include T167–T168, S194, Q200, and R202. K234 bears the N6-carboxylysine mark. Meso-2,6-diaminopimelate is bound by residues R406, D430–R433, G481, and E485. A Meso-diaminopimelate recognition motif motif is present at residues D430–R433.

It belongs to the MurCDEF family. MurE subfamily. It depends on Mg(2+) as a cofactor. Post-translationally, carboxylation is probably crucial for Mg(2+) binding and, consequently, for the gamma-phosphate positioning of ATP.

It is found in the cytoplasm. The catalysed reaction is UDP-N-acetyl-alpha-D-muramoyl-L-alanyl-D-glutamate + meso-2,6-diaminopimelate + ATP = UDP-N-acetyl-alpha-D-muramoyl-L-alanyl-gamma-D-glutamyl-meso-2,6-diaminopimelate + ADP + phosphate + H(+). Its pathway is cell wall biogenesis; peptidoglycan biosynthesis. In terms of biological role, catalyzes the addition of meso-diaminopimelic acid to the nucleotide precursor UDP-N-acetylmuramoyl-L-alanyl-D-glutamate (UMAG) in the biosynthesis of bacterial cell-wall peptidoglycan. The protein is UDP-N-acetylmuramoyl-L-alanyl-D-glutamate--2,6-diaminopimelate ligase of Ralstonia nicotianae (strain ATCC BAA-1114 / GMI1000) (Ralstonia solanacearum).